A 142-amino-acid polypeptide reads, in one-letter code: MRNYDLSPLLRQWIGFDKLANALQNSGESQSFPPYNIEKSDDNHYRITLALAGFRQEDLDIQLEGTRLTVKGTPEQPENEPKWLHQGLVMQPFSLSFTLAENMEVSGATFTNGLLHIDLTRNEPETIAPQRIAINERSALNS.

The region spanning 26 to 137 is the sHSP domain; it reads SGESQSFPPY…APQRIAINER (112 aa).

This sequence belongs to the small heat shock protein (HSP20) family. In terms of assembly, homodimer. Forms homomultimers of about 100-150 subunits at optimal growth temperatures. Conformation changes to oligomers at high temperatures or high ionic concentrations. The decrease in size of the multimers is accompanied by an increase in chaperone activity.

The protein resides in the cytoplasm. Associates with aggregated proteins, together with IbpA, to stabilize and protect them from irreversible denaturation and extensive proteolysis during heat shock and oxidative stress. Aggregated proteins bound to the IbpAB complex are more efficiently refolded and reactivated by the ATP-dependent chaperone systems ClpB and DnaK/DnaJ/GrpE. Its activity is ATP-independent. This chain is Small heat shock protein IbpB, found in Salmonella newport (strain SL254).